Consider the following 253-residue polypeptide: Methionine aminopeptidase A (253 aa).

Histidine 80 provides a ligand contact to substrate. 3 residues coordinate a divalent metal cation: aspartate 98, aspartate 109, and histidine 172. Histidine 179 is a substrate binding site. A divalent metal cation contacts are provided by glutamate 205 and glutamate 236.

Belongs to the peptidase M24A family. Methionine aminopeptidase type 1 subfamily. As to quaternary structure, monomer. Co(2+) serves as cofactor. It depends on Zn(2+) as a cofactor. Mn(2+) is required as a cofactor. The cofactor is Fe(2+).

It catalyses the reaction Release of N-terminal amino acids, preferentially methionine, from peptides and arylamides.. Functionally, removes the N-terminal methionine from nascent proteins. The N-terminal methionine is often cleaved when the second residue in the primary sequence is small and uncharged (Met-Ala-, Cys, Gly, Pro, Ser, Thr, or Val). Requires deformylation of the N(alpha)-formylated initiator methionine before it can be hydrolyzed. This is Methionine aminopeptidase A from Synechocystis sp. (strain ATCC 27184 / PCC 6803 / Kazusa).